A 299-amino-acid polypeptide reads, in one-letter code: MKPDAHQVKQFLLNLQDTICQQLSAVDGAEFVEDSWQREAGGGGRSRVLRNGGVFEQAGVNFSHVHGEAMPASATAHRPELAGRSFEAMGVSLVVHPHNPYVPTSHANVRFFIAEKPGAEPVWWFGGGFDLTPFYGFEEDAIHWHRTARDLCLPFGEDVYPRYKKWCDEYFYLKHRNEQRGIGGLFFDDLNTPDFDHCFAFMQAVGKGYTDAYLPIVERRKAMAYGERERNFQLYRRGRYVEFNLVWDRGTLFGLQTGGRTESILMSMPPLVRWEYDYQPKDGSPEAALSEFIKVRDWV.

Ser-92 is a binding site for substrate. Residues His-96 and His-106 each coordinate Mn(2+). The active-site Proton donor is the His-106. Residue 108-110 participates in substrate binding; it reads NVR. Mn(2+)-binding residues include His-145 and His-175. An important for dimerization region spans residues 240–275; that stretch reads YVEFNLVWDRGTLFGLQTGGRTESILMSMPPLVRWE. Residue 258–260 participates in substrate binding; it reads GGR.

It belongs to the aerobic coproporphyrinogen-III oxidase family. Homodimer. The cofactor is Mn(2+).

The protein localises to the cytoplasm. It carries out the reaction coproporphyrinogen III + O2 + 2 H(+) = protoporphyrinogen IX + 2 CO2 + 2 H2O. Its pathway is porphyrin-containing compound metabolism; protoporphyrin-IX biosynthesis; protoporphyrinogen-IX from coproporphyrinogen-III (O2 route): step 1/1. Involved in the heme biosynthesis. Catalyzes the aerobic oxidative decarboxylation of propionate groups of rings A and B of coproporphyrinogen-III to yield the vinyl groups in protoporphyrinogen-IX. This is Oxygen-dependent coproporphyrinogen-III oxidase from Escherichia coli O127:H6 (strain E2348/69 / EPEC).